Here is a 259-residue protein sequence, read N- to C-terminus: MKAAITSWADEVEADYVDGLPPSKEYVDGDYKHVTEYKFNDEGKKIKVVRSFKIEKKIVSRAVAKRRNWVKFGDSKLDKPGPNSYTTKVADEILMNYMGSKDFEHAQDPLDAGKPMAKCRICNGEHWSVKCPYKGTSMDMESKAIAAATAAVGETNKTGKYVPPFLKDGAKGRERDDSSAVRISNLSESMTEDDLEELVKKIGPYTKMYLAREKNSGLCKGFAYVHFKYRKDAAEAIEILNGHGYDHLILSVEWSKPQN.

Residues 179–257 (SAVRISNLSE…LILSVEWSKP (79 aa)) form the RRM domain.

It belongs to the eIF-3 subunit G family. Component of the eukaryotic translation initiation factor 3 (eIF-3) complex. The eIF-3 complex interacts with pix.

The protein localises to the cytoplasm. Its function is as follows. RNA-binding component of the eukaryotic translation initiation factor 3 (eIF-3) complex, which is involved in protein synthesis of a specialized repertoire of mRNAs and, together with other initiation factors, stimulates binding of mRNA and methionyl-tRNAi to the 40S ribosome. The eIF-3 complex specifically targets and initiates translation of a subset of mRNAs involved in cell proliferation. This subunit can bind 18S rRNA. This is Eukaryotic translation initiation factor 3 subunit G-2 from Drosophila virilis (Fruit fly).